The primary structure comprises 371 residues: Transmembrane protein 229A (371 aa).

The segment at 1–30 (MAGSDVASEGPSPRDGATRRPGATGGLRSQ) is disordered. Helical transmembrane passes span 51–71 (LPAWMRLYFYGMHGITLDVLV), 117–137 (AFLFNFLLYPSAHVGLQTLAG), 235–255 (FLFFGMHGFLDEIFFTFFFNV), 269–289 (LWSFFMYGSCSFVVEKLYFHL), 301–321 (VPIYVIFIYAWEFSWGLGLRM), and 334–354 (LNFMGLITLMYLPGWLFLSVY).

This sequence belongs to the TMEM229 family.

The protein resides in the membrane. In Mus musculus (Mouse), this protein is Transmembrane protein 229A (Tmem229a).